The primary structure comprises 700 residues: Leucine zipper putative tumor suppressor 3 (700 aa).

4 disordered regions span residues 1-20 (MAPA…PAPH), 40-121 (RADP…SEDK), 133-188 (LRGS…SEPL), and 202-344 (FHSM…PPSP). A compositionally biased stretch (basic and acidic residues) spans 109–121 (NRERPGRYPSEDK). The segment covering 203 to 216 (HSMQNLCPPQTNGT) has biased composition (polar residues). Low complexity-rich tracts occupy residues 248–265 (DSGR…SSYS) and 301–321 (GTSD…MGRS). The span at 322–333 (GHLGSGEGGNGG) shows a compositional bias: gly residues. Residues Ser-343 and Ser-345 each carry the phosphoserine modification. Coiled-coil stretches lie at residues 345 to 523 (SALI…SLRD) and 597 to 666 (TRAL…RLRE). The interval 662 to 700 (RRLRERGAAGGSSTPTPQHGEEKKAWTPSRLERIESTEI) is disordered. The segment covering 680–700 (HGEEKKAWTPSRLERIESTEI) has biased composition (basic and acidic residues).

Belongs to the LZTS3 family. Interacts (via C-terminus) with SHANK3 (via PDZ domain). Interacts (via coiled coil) with SIPA1L1. Can form homooligomers.

Its subcellular location is the synapse. The protein localises to the postsynaptic density. It localises to the cell projection. It is found in the dendritic spine. The protein resides in the dendrite. Its subcellular location is the cytoplasm. The protein localises to the cytoskeleton. Its function is as follows. May be involved in promoting the maturation of dendritic spines, probably via regulating SIPA1L1 levels at the postsynaptic density of synapses. This is Leucine zipper putative tumor suppressor 3 from Mus musculus (Mouse).